An 838-amino-acid chain; its full sequence is Ribonucleoside-diphosphate reductase large subunit (838 aa).

The region spanning 6–97 is the ATP-cone domain; it reads KLVTKRDGSV…VTALHKTTTE (92 aa). ATP-binding positions include 10–11, 16–22, T58, and D62; these read KR and EPYDEKV. A GDP-binding site is contributed by S227. An intrachain disulfide couples C228 to C454. DTTP contacts are provided by residues 236 to 238, K253, R266, and 273 to 274; these read DSI and AG. N437 serves as a coordination point for GDP. The Proton acceptor role is filled by N437. Residue C439 is the Cysteine radical intermediate of the active site. Residues E441 and 626-629 contribute to the GDP site; that span reads TAST. E441 acts as the Proton acceptor in catalysis. Basic and acidic residues predominate over residues 780–794; the sequence is KELPKPDKQSKEEVH. Residues 780-838 are disordered; sequence KELPKPDKQSKEEVHGSVGRGKRKRVGEKPTANHSNAGAPNLNGPPDTDGDGGCLNCGS.

This sequence belongs to the ribonucleoside diphosphate reductase large chain family. Heterodimer of a large and a small subunit.

The catalysed reaction is a 2'-deoxyribonucleoside 5'-diphosphate + [thioredoxin]-disulfide + H2O = a ribonucleoside 5'-diphosphate + [thioredoxin]-dithiol. The enzyme catalyses dCDP + [thioredoxin]-disulfide + H2O = CDP + [thioredoxin]-dithiol. With respect to regulation, under complex allosteric control mediated by deoxynucleoside triphosphates and ATP binding to separate specificity and activation sites on the large subunit. The type of nucleotide bound at the specificity site determines substrate preference. It seems probable that ATP makes the enzyme reduce CDP and UDP, dGTP favors ADP reduction and dTTP favors GDP reduction. Stimulated by ATP and inhibited by dATP binding to the activity site. Functionally, provides the precursors necessary for DNA synthesis. Catalyzes the rate limiting step in the de novo synthesis of deoxyribonucleotides by directly reducing ribonucleotides to the corresponding deoxyribonucleotides. This chain is Ribonucleoside-diphosphate reductase large subunit (RNR1), found in Trypanosoma brucei brucei.